The sequence spans 164 residues: NADH-quinone oxidoreductase subunit I (164 aa).

2 4Fe-4S ferredoxin-type domains span residues 55-84 (RRYEGGEERCVACKLCEAICPAQAIYIEID) and 95-124 (KVYDIDLFKCIYCGLCEEACPVEAIVMGPY). [4Fe-4S] cluster contacts are provided by C64, C67, C70, C74, C104, C107, C110, and C114.

Belongs to the complex I 23 kDa subunit family. As to quaternary structure, NDH-1 is composed of 14 different subunits. Subunits NuoA, H, J, K, L, M, N constitute the membrane sector of the complex. The cofactor is [4Fe-4S] cluster.

Its subcellular location is the cell inner membrane. The catalysed reaction is a quinone + NADH + 5 H(+)(in) = a quinol + NAD(+) + 4 H(+)(out). Functionally, NDH-1 shuttles electrons from NADH, via FMN and iron-sulfur (Fe-S) centers, to quinones in the respiratory chain. The immediate electron acceptor for the enzyme in this species is believed to be ubiquinone. Couples the redox reaction to proton translocation (for every two electrons transferred, four hydrogen ions are translocated across the cytoplasmic membrane), and thus conserves the redox energy in a proton gradient. This Magnetococcus marinus (strain ATCC BAA-1437 / JCM 17883 / MC-1) protein is NADH-quinone oxidoreductase subunit I.